The chain runs to 352 residues: Glycogen synthase kinase 3 (352 aa).

In terms of domain architecture, Protein kinase spans 20–310; the sequence is YTVERVAGQG…PLDALCHPFF (291 aa). Residues 26 to 34 and Lys49 contribute to the ATP site; that span reads AGQGTFGTV. The active-site Proton acceptor is Asp152.

Belongs to the protein kinase superfamily. CMGC Ser/Thr protein kinase family. GSK-3 subfamily. As to quaternary structure, inhibited by cyclin kinase 2 (CDK2) inhibitors, including GW8510.

The enzyme catalyses L-seryl-[tau protein] + ATP = O-phospho-L-seryl-[tau protein] + ADP + H(+). The catalysed reaction is L-threonyl-[tau protein] + ATP = O-phospho-L-threonyl-[tau protein] + ADP + H(+). In Trypanosoma brucei brucei (strain 927/4 GUTat10.1), this protein is Glycogen synthase kinase 3.